The following is a 185-amino-acid chain: Putative manganese efflux pump MntP (185 aa).

The next 6 membrane-spanning stretches (helical) occupy residues 3-23, 41-61, 70-90, 101-121, 123-143, and 165-185; these read PFAV…VSVG, AVFG…GVAA, HWLA…AAVW, SFTV…AVGV, LAFL…ATFL, and AVAG…HLTA.

It belongs to the MntP (TC 9.B.29) family.

It localises to the cell inner membrane. Probably functions as a manganese efflux pump. The sequence is that of Putative manganese efflux pump MntP from Bradyrhizobium sp. (strain BTAi1 / ATCC BAA-1182).